A 1210-amino-acid polypeptide reads, in one-letter code: Multimerin-1 (1210 aa).

A signal peptide spans 1–19 (MLGLKFLVLLSILWGRVFR). Residues 57–102 (ATQNPSTQGPAAAERSSEDDVLLQSTSQPSETSTPPEGRHQTPLEK) are disordered. The span at 80–92 (QSTSQPSETSTPP) shows a compositional bias: low complexity. The N-linked (GlcNAc...) asparagine glycan is linked to N133. Residues 143-155 (SRKSDQQEVSTKS) are compositionally biased toward polar residues. The disordered stretch occupies residues 143–190 (SRKSDQQEVSTKSAGDMGNRSARETHLRRSDNSRNQRPSYQKPSFETT). N161 carries N-linked (GlcNAc...) asparagine glycosylation. Residues 163–176 (SARETHLRRSDNSR) are compositionally biased toward basic and acidic residues. The span at 177–189 (NQRPSYQKPSFET) shows a compositional bias: polar residues. An EMI domain is found at 192-267 (GKNWCAHVHT…PGYIGPNCQL (76 aa)). 3 cysteine pairs are disulfide-bonded: C196–C257, C222–C230, and C256–C265. O-linked (Fuc) threonine glycosylation occurs at T201. O-linked (Fuc) threonine glycosylation occurs at T250. The segment at 276–299 (AHSNQAESHTAVDQGRAQQQKQDC) is disordered. Positions 303-338 (AMIQKLAEQLSQQERKLSLLQKKVDNASLVADDMRN) form a coiled coil. N328, N415, N491, N525, N560, N602, N712, N765, N810, N822, N903, N915, N963, and N1000 each carry an N-linked (GlcNAc...) asparagine glycan. A coiled-coil region spans residues 564–690 (LLEMEKESAR…RHNLLRNEVQ (127 aa)). Residues 809–846 (FNETTSQVNKCQQNMSHLEENMLSVTKTAKEFETRLQG) are a coiled coil. Residues 1023-1059 (EHSSCSSFPCQNGGTCISGRSNFICACRHPFMGDTCT) enclose the EGF-like domain. Intrachain disulfides connect C1027–C1038, C1032–C1047, and C1049–C1058. A glycan (O-linked (Fuc) threonine) is linked at T1037. The region spanning 1078–1210 (RYAPMVAFFV…TFSGYLLYRT (133 aa)) is the C1q domain.

Multimeric. Composed of varying sized, disulfide-linked multimers, the smallest of which is a homotrimer. Proteolysis of the promultimerin in the N-terminal region, leads to the mature p155 form that is stored in platelets. Interacts with factor V/Va. Post-translationally, extensively N-glycosylated. In terms of processing, O-fucosylated within the EMI domain (at Thr-201 and Thr-250) by FUT10/POFUT3 and FUT11/POFUT4. O-fucosylation at Thr-201 and Thr-1037 are required for facilitating protein folding and secretion.

It is found in the secreted. Functionally, carrier protein for platelet (but not plasma) factor V/Va. Plays a role in the storage and stabilization of factor V in platelets. Upon release following platelet activation, may limit platelet and plasma factor Va-dependent thrombin generation. Ligand for integrin alpha-IIb/beta-3 and integrin alpha-V/beta-3 on activated platelets, and may function as an extracellular matrix or adhesive protein. This Mus musculus (Mouse) protein is Multimerin-1.